The following is a 290-amino-acid chain: Ribosomal RNA small subunit methyltransferase A (290 aa).

S-adenosyl-L-methionine contacts are provided by N27, L29, G54, E75, D100, and N125.

Belongs to the class I-like SAM-binding methyltransferase superfamily. rRNA adenine N(6)-methyltransferase family. RsmA subfamily.

Its subcellular location is the cytoplasm. It carries out the reaction adenosine(1518)/adenosine(1519) in 16S rRNA + 4 S-adenosyl-L-methionine = N(6)-dimethyladenosine(1518)/N(6)-dimethyladenosine(1519) in 16S rRNA + 4 S-adenosyl-L-homocysteine + 4 H(+). Functionally, specifically dimethylates two adjacent adenosines (A1518 and A1519) in the loop of a conserved hairpin near the 3'-end of 16S rRNA in the 30S particle. May play a critical role in biogenesis of 30S subunits. The protein is Ribosomal RNA small subunit methyltransferase A of Streptococcus uberis (strain ATCC BAA-854 / 0140J).